Here is a 651-residue protein sequence, read N- to C-terminus: Beta-mannosyltransferase 7 (651 aa).

Topologically, residues 1–19 (MKLEMSSYLHKVPNTGITN) are cytoplasmic. The helical transmembrane segment at 20–42 (LSNSKSIVFIMFCATLLFIITSS) threads the bilayer. Topologically, residues 43–651 (RYLTGSESLG…VKIDEKSEET (609 aa)) are extracellular. Residues Asn271 and Asn423 are each glycosylated (N-linked (GlcNAc...) asparagine).

It belongs to the BMT family.

Its subcellular location is the membrane. Beta-mannosyltransferase involved in cell wall biosynthesis through beta-1,2-mannosylation of cell wall phosphopeptidomannan. The protein is Beta-mannosyltransferase 7 (BMT7) of Candida albicans (strain SC5314 / ATCC MYA-2876) (Yeast).